A 490-amino-acid polypeptide reads, in one-letter code: GTPase Der (490 aa).

EngA-type G domains are found at residues 3-166 and 203-376; these read PVVA…MDDV and IKLA…DSST. GTP is bound by residues 9–16, 56–60, 118–121, 209–216, 256–260, and 321–324; these read GRPNVGKS, DTGGI, NKTD, DTAGV, and NKWD. Residues 377–461 form the KH-like domain; it reads RRVSTAMLTR…PIRIQFKEGE (85 aa).

The protein belongs to the TRAFAC class TrmE-Era-EngA-EngB-Septin-like GTPase superfamily. EngA (Der) GTPase family. Associates with the 50S ribosomal subunit.

Its function is as follows. GTPase that plays an essential role in the late steps of ribosome biogenesis. The sequence is that of GTPase Der from Salmonella typhi.